The primary structure comprises 133 residues: Ribonuclease P protein component (133 aa).

This sequence belongs to the RnpA family. In terms of assembly, consists of a catalytic RNA component (M1 or rnpB) and a protein subunit.

It carries out the reaction Endonucleolytic cleavage of RNA, removing 5'-extranucleotides from tRNA precursor.. In terms of biological role, RNaseP catalyzes the removal of the 5'-leader sequence from pre-tRNA to produce the mature 5'-terminus. It can also cleave other RNA substrates such as 4.5S RNA. The protein component plays an auxiliary but essential role in vivo by binding to the 5'-leader sequence and broadening the substrate specificity of the ribozyme. In Synechococcus sp. (strain JA-2-3B'a(2-13)) (Cyanobacteria bacterium Yellowstone B-Prime), this protein is Ribonuclease P protein component.